A 309-amino-acid chain; its full sequence is Foldase protein PrsA (309 aa).

Residues 1–20 form the signal peptide; that stretch reads MKKKIVAGAVTLLSVAVLAA. Cys-21 carries N-palmitoyl cysteine lipidation. Residue Cys-21 is the site of S-diacylglycerol cysteine attachment. The region spanning 144–241 is the PpiC domain; sequence TPEVTAQIIK…ASYYIVKLVS (98 aa).

It belongs to the PrsA family.

It is found in the cell membrane. It catalyses the reaction [protein]-peptidylproline (omega=180) = [protein]-peptidylproline (omega=0). Its function is as follows. Plays a major role in protein secretion by helping the post-translocational extracellular folding of several secreted proteins. The protein is Foldase protein PrsA of Streptococcus gordonii (strain Challis / ATCC 35105 / BCRC 15272 / CH1 / DL1 / V288).